A 312-amino-acid chain; its full sequence is Speedy protein A (312 aa).

The speedy/Ringo box; Required for CDK-binding stretch occupies residues 67–199; sequence RQEMTAFFKL…SHYIWQRERS (133 aa). A Phosphoserine modification is found at serine 221. Threonine 223 carries the post-translational modification Phosphothreonine.

This sequence belongs to the Speedy/Ringo family. In terms of assembly, interacts with CDK1. Interacts with CDK2. May interact with CDKN1B/KIP1. Identified in a complex with CDK2 and CDKN1B/KIP1, where it interacts primarily with CDK2.

It localises to the nucleus. In terms of biological role, regulates the G1/S phase transition of the cell cycle by binding and activating CDK1 and CDK2. Contributes to CDK2 activation without promoting CDK2 phosphorylation, by inducing a conformation change of the CDK2 T-loop that obstructs the substrate-binding cleft prior to kinase activation. Interferes with CDKN1B-mediated inhibition of CDK2. Mediates cell survival during the DNA damage process through activation of CDK2. This Rattus norvegicus (Rat) protein is Speedy protein A.